We begin with the raw amino-acid sequence, 1878 residues long: MDMEIDDVDNLWTYRSVCMPDYKDAAEIIRPEFDMTKRIFNQRKHLLGMDGHCSTGMTMNEFGTRPMVFTVSKGCYPDLPTDKDKFVGDPQGPKELYMHVYGRFDTYYLDLQNEFQDINNVMNTTHDYNIYDLLKTGARTAMVREAFAGANIHGWLGTKLVYKRPPQSSAGGCRFMVKVYIAGQKTASAYQIKNTLNATSNRFRKKVYNSCVQTYTDFLVAKNAGPIGEMRIKKGVNPGVKKGAKYDYVDVHYRDIEFSNYDTFVLSEIDGVGEDLINLATSILNNHRNNFDILTKTFIKSRLKSLAPIIGGLIGSPNDFTKFKKKMVMYIMTKEFKNCMEYYLTELRSKGIQLYHALGIKSEDVKEEYVRTFCVNMLRYQYLLVMSLKEFWVEKVRGKLYSAVMAKEKEMLTQKIGMQLRTMCFDIETNFVPHSDAEQQVTLIHCVLYDEGAHNCPIEQRTFHYKAEERSMESLKTDLTYDKVVELCKKQVRDGYDLKMKEWLTRTVEQTGMFKSKKILSLFFEKMMTESKIKIHPDSHDYDADNSEPKSVEECLAFCKKRIIEVFDICMEPGKNYFIYNFKTEKEMLLAFLKYVRDSNLTVLTHYNGDSFDLPFVINRCEKLKIDGMKEYTPATFSDGSTETKRRRFQLKLTHRHDILTIKYKKSGKVADSTHKKNAINSYLESKREKLFQADDDDDDDDEDEDDGLLDERQQDSAEDMKKKGPNVYRPMAEARNIFTLQSNFVASRDVMKMVPDQAPNVDDKILKDKTLNSSAFSFLGIRKIDHEAVSYANLCKTWKFGDLNIFVAYCAVDTLLTMKIDQTLKTGMNAVATASNVYLPIRELYGNQALVRTLAIMYSYQWYKNICSPDPSVFKNEDRFWNPEYVWKDDDFKDLKPRAGRTISNVSGVYNSFFSVLFDFNSQYPGVMISENVCVSTLLDKEDADKMSKDDYVEMTIPNVYPKVRHACEPGSEKCGMNLEVVKKKKDYGLKCKWTQEFVMCEHIAKFAKKSVMEGIAGECCKNLLAKRKHYKKLMAEAAKGGNHTEVVIYNQLQLVMKVNANSIFGILLLLDSVTGGAITHEARMQNERGSEYLKKVSGPMAMADTDSTAPIAENLPLDWQPGDDKDDVGPLNRLCRRLFPGRKRPKISEFVHKIDTMYESYGSYLNDGVPEKGIPPAWIKPANLEIEKMFIGLVFIKKKNYYALKMLPGGELATHVAGLACMKSDKTKIKGATQLVLLKMLVEGDYEGYIRYATDLFSLMVVTLRAEEASKSAVKMAVENGQLEGLDELEEKTKRDFGYRDLIPKVYYTSREKVNSIENPKTVADKMEQLRCKRYGIDFSIAATVTDVVRGIKPQVGAPLTAINNTILIREPTEEQKTIEREMDMRWMARSFRQQTREDNRLSDKKEKIKKKNAEVKPLDITDMPDRLKVDQQVHTTPFPTRIRLGVKKLNNMIDYSEKAITKERDSDFVKELFHQPELMADEEELQRATEQVVEMIENFKSFSLHFPLFWYDERYCISNILELEDLDEVWHTLPNDESCVDLWNMYKNLEYEPRYIAVKVGKMGERLQMAFFDSVEESWMEYKCTNCYIFKENVWSLDDKNLAGKIYYMDMQEYEKQTRTTPLIITSPDKKKRYLVNRGSYVRNKNNAFSFKIKNETLMNAMSQTGDVGDKYLTFKPIYGKAGVCIIGSKSAGMCKSTFIRDDGREMPATWPYKRLNNQGIKIPRQKLLKIMNDSLEIRNIHNNHNLEFSFDSKTKNLTIRVETAFDEKRIKFYDESKQEKLEIDIGTNGQTQLGSFYTSVRIENKVEKKPKEVLPEKKQSTLSHFVGMSSAPKFTQDDVVKKKRAPKRAAIDRKSGSGGKKSKITAGKTAGTMF.

Disordered stretches follow at residues 691–727 (LFQADDDDDDDDEDEDDGLLDERQQDSAEDMKKKGPN) and 1839–1878 (TQDDVVKKKRAPKRAAIDRKSGSGGKKSKITAGKTAGTMF). Over residues 694–709 (ADDDDDDDDEDEDDGL) the composition is skewed to acidic residues. Basic and acidic residues predominate over residues 710 to 723 (LDERQQDSAEDMKK). A compositionally biased stretch (low complexity) spans 1868-1878 (ITAGKTAGTMF).

This sequence belongs to the DNA polymerase type-B family.

The enzyme catalyses DNA(n) + a 2'-deoxyribonucleoside 5'-triphosphate = DNA(n+1) + diphosphate. The chain is DNA polymerase from Magallana gigas (Pacific oyster).